Consider the following 807-residue polypeptide: Poly-beta-1,6-N-acetyl-D-glucosamine export protein (807 aa).

Positions 1-26 (MYSSSRKRCPKTKWALKLLTAAFLAA) are cleaved as a signal peptide. 3 TPR repeats span residues 98-131 (ARGY…EPQN), 165-198 (KANL…NAST), and 279-311 (RIQV…GQII).

The protein resides in the cell outer membrane. Exports the biofilm adhesin polysaccharide poly-beta-1,6-N-acetyl-D-glucosamine (PGA) across the outer membrane. The PGA transported seems to be partially N-deacetylated since N-deacetylation of PGA by PgaB is needed for PGA export through the PgaA porin. This chain is Poly-beta-1,6-N-acetyl-D-glucosamine export protein (pgaA), found in Escherichia coli O157:H7.